We begin with the raw amino-acid sequence, 428 residues long: Glutamate-1-semialdehyde 2,1-aminomutase 1 (428 aa).

Lysine 268 bears the N6-(pyridoxal phosphate)lysine mark.

Belongs to the class-III pyridoxal-phosphate-dependent aminotransferase family. HemL subfamily. As to quaternary structure, homodimer. Pyridoxal 5'-phosphate serves as cofactor.

It localises to the cytoplasm. The catalysed reaction is (S)-4-amino-5-oxopentanoate = 5-aminolevulinate. Its pathway is porphyrin-containing compound metabolism; protoporphyrin-IX biosynthesis; 5-aminolevulinate from L-glutamyl-tRNA(Glu): step 2/2. The chain is Glutamate-1-semialdehyde 2,1-aminomutase 1 from Geobacillus thermodenitrificans (strain NG80-2).